Reading from the N-terminus, the 90-residue chain is Small ribosomal subunit protein uS15c (90 aa).

It belongs to the universal ribosomal protein uS15 family. As to quaternary structure, part of the 30S ribosomal subunit.

The protein localises to the plastid. It is found in the chloroplast. The protein is Small ribosomal subunit protein uS15c (rps15) of Liriodendron tulipifera (Tuliptree).